Here is a 274-residue protein sequence, read N- to C-terminus: Malonyl-[acyl-carrier protein] O-methyltransferase (274 aa).

Belongs to the methyltransferase superfamily.

The catalysed reaction is malonyl-[ACP] + S-adenosyl-L-methionine = malonyl-[ACP] methyl ester + S-adenosyl-L-homocysteine. It participates in cofactor biosynthesis; biotin biosynthesis. Functionally, converts the free carboxyl group of a malonyl-thioester to its methyl ester by transfer of a methyl group from S-adenosyl-L-methionine (SAM). It allows to synthesize pimeloyl-ACP via the fatty acid synthetic pathway. In Bacteroides helcogenes (strain ATCC 35417 / DSM 20613 / JCM 6297 / CCUG 15421 / P 36-108), this protein is Malonyl-[acyl-carrier protein] O-methyltransferase.